The sequence spans 77 residues: Conotoxin Ar5.1 a (77 aa).

The N-terminal stretch at 1–19 (MLCLPVFIILLLLASPAAS) is a signal peptide. Residues 20-44 (NPLETRIQSDLIRAALEDADMKNEK) constitute a propeptide that is removed on maturation.

Belongs to the conotoxin T superfamily. In terms of processing, contains 2 disulfide bonds that can be either 'C1-C3, C2-C4' or 'C1-C4, C2-C3', since these disulfide connectivities have been observed for conotoxins with cysteine framework V (for examples, see AC P0DQQ7 and AC P81755). Expressed by the venom duct.

The protein localises to the secreted. This Conus arenatus (Sand-dusted cone) protein is Conotoxin Ar5.1 a.